The sequence spans 313 residues: tRNA pseudouridine synthase B (313 aa).

Catalysis depends on Asp-42, which acts as the Nucleophile.

The protein belongs to the pseudouridine synthase TruB family. Type 1 subfamily.

It catalyses the reaction uridine(55) in tRNA = pseudouridine(55) in tRNA. Its function is as follows. Responsible for synthesis of pseudouridine from uracil-55 in the psi GC loop of transfer RNAs. This is tRNA pseudouridine synthase B from Prochlorococcus marinus (strain SARG / CCMP1375 / SS120).